Consider the following 341-residue polypeptide: MENPPYHVSISKSEEIKYRQKCKDLKARIQEIQKGNQELLSKYEVIRRAVKRGRLERAILMEQLELQSEAKSREFGQRSEPSPPPPPEGIKIKISTKGAGNPSAKKLKISTEETSDTNVALNNTSEISHKSSNNSQPKDASVNDTDADFEQQNQVVQSKDEKITNTDPIPSPIITNLKTESSKSSGAKKATSNAKITDTMLFNHFSSIQKPKLKAEGSTLKGQALKKTLEDTWNNLTEEEKKPYHEGLLAAREKAREARRRRSAQNSAKLEKEKAKEKQKDKDQEQDTVSDKNQIDEIEKGQKEVDEEPVSEPTTSPILPPKNQEPIRMGGFTVVNRSSNA.

The span at 68 to 77 (SEAKSREFGQ) shows a compositional bias: basic and acidic residues. Disordered stretches follow at residues 68–195 (SEAK…SNAK) and 236–341 (LTEE…SSNA). 2 stretches are compositionally biased toward polar residues: residues 116-157 (DTNV…QVVQ) and 165-177 (NTDP…ITNL). Residues 178 to 195 (KTESSKSSGAKKATSNAK) are compositionally biased toward low complexity. A DNA-binding region (HMG box) is located at residues 195–263 (KITDTMLFNH…KAREARRRRS (69 aa)). 2 stretches are compositionally biased toward basic and acidic residues: residues 238-256 (EEEK…EKAR) and 269-304 (KLEK…GQKE). 2 positions are modified to phosphothreonine: Thr-314 and Thr-315. A Phosphoserine modification is found at Ser-316.

The protein localises to the nucleus. The polypeptide is HMG box-containing protein C10F6.08c (Schizosaccharomyces pombe (strain 972 / ATCC 24843) (Fission yeast)).